A 396-amino-acid chain; its full sequence is Putative N(4)-(beta-N-acetylglucosaminyl)-L-asparaginase GG24090 (396 aa).

The first 23 residues, 1-23 (MKRHLGTCLWVLCLASTAFSSLA), serve as a signal peptide directing secretion. Cystine bridges form between cysteine 100/cysteine 105 and cysteine 199/cysteine 215. The active-site Nucleophile is threonine 246. Residues 274–277 (RVGD) and 297–300 (TGDG) each bind substrate. The cysteines at positions 357 and 384 are disulfide-linked.

Belongs to the Ntn-hydrolase family. As to quaternary structure, heterotetramer of two alpha and two beta chains arranged as a dimer of alpha/beta heterodimers. In terms of processing, cleaved into an alpha and beta chain by autocatalysis; this activates the enzyme. The N-terminal residue of the beta subunit is responsible for the nucleophile hydrolase activity.

It catalyses the reaction N(4)-(beta-N-acetyl-D-glucosaminyl)-L-asparagine + H2O = N-acetyl-beta-D-glucosaminylamine + L-aspartate + H(+). In terms of biological role, cleaves the GlcNAc-Asn bond which joins oligosaccharides to the peptide of asparagine-linked glycoproteins. The sequence is that of Putative N(4)-(beta-N-acetylglucosaminyl)-L-asparaginase GG24090 from Drosophila erecta (Fruit fly).